The primary structure comprises 503 residues: ATP synthase subunit alpha (503 aa).

170–177 serves as a coordination point for ATP; sequence GDRKTGKT.

The protein belongs to the ATPase alpha/beta chains family. In terms of assembly, F-type ATPases have 2 components, CF(1) - the catalytic core - and CF(0) - the membrane proton channel. CF(1) has five subunits: alpha(3), beta(3), gamma(1), delta(1), epsilon(1). CF(0) has four main subunits: a, b, b' and c.

It is found in the cellular thylakoid membrane. It carries out the reaction ATP + H2O + 4 H(+)(in) = ADP + phosphate + 5 H(+)(out). Produces ATP from ADP in the presence of a proton gradient across the membrane. The alpha chain is a regulatory subunit. The polypeptide is ATP synthase subunit alpha (Rippkaea orientalis (strain PCC 8801 / RF-1) (Cyanothece sp. (strain PCC 8801))).